Reading from the N-terminus, the 87-residue chain is Small ribosomal subunit protein bS20 (87 aa).

This sequence belongs to the bacterial ribosomal protein bS20 family.

Functionally, binds directly to 16S ribosomal RNA. The protein is Small ribosomal subunit protein bS20 of Parvibaculum lavamentivorans (strain DS-1 / DSM 13023 / NCIMB 13966).